A 233-amino-acid polypeptide reads, in one-letter code: Proteasome subunit alpha (233 aa).

Belongs to the peptidase T1A family. In terms of assembly, the 20S proteasome core is composed of 14 alpha and 14 beta subunits that assemble into four stacked heptameric rings, resulting in a barrel-shaped structure. The two inner rings, each composed of seven catalytic beta subunits, are sandwiched by two outer rings, each composed of seven alpha subunits. The catalytic chamber with the active sites is on the inside of the barrel. Has a gated structure, the ends of the cylinder being occluded by the N-termini of the alpha-subunits. Is capped at one or both ends by the proteasome regulatory ATPase, PAN. In terms of processing, the N-terminus is blocked.

It localises to the cytoplasm. The formation of the proteasomal ATPase PAN-20S proteasome complex, via the docking of the C-termini of PAN into the intersubunit pockets in the alpha-rings, triggers opening of the gate for substrate entry. Interconversion between the open-gate and close-gate conformations leads to a dynamic regulation of the 20S proteasome proteolysis activity. In terms of biological role, component of the proteasome core, a large protease complex with broad specificity involved in protein degradation. The T.acidophilum proteasome is able to cleave oligopeptides after Tyr, Leu, Phe, and to a lesser extent after Glu and Arg. Thus, displays chymotrypsin-like activity and low level of caspase-like and trypsin-like activities. This is Proteasome subunit alpha from Thermoplasma acidophilum (strain ATCC 25905 / DSM 1728 / JCM 9062 / NBRC 15155 / AMRC-C165).